Reading from the N-terminus, the 217-residue chain is Adenylate kinase (217 aa).

Residue 11–16 participates in ATP binding; it reads GAGKGT. Residues 31 to 60 form an NMP region; sequence STGDMFREAMANETPVGLEAKSYIDKGDLV. AMP-binding positions include T32, R37, 58–60, 86–89, and Q93; these read DLV and GFPR. The interval 127 to 165 is LID; sequence ARYICKNCGATYNKISNPTKVEGTCDRCGGHEFFQREDD. Residue R128 coordinates ATP. Residues C131 and C134 each contribute to the Zn(2+) site. 137-138 is an ATP binding site; sequence TY. Zn(2+)-binding residues include C151 and C154. R162 and R173 together coordinate AMP. Q201 is an ATP binding site.

It belongs to the adenylate kinase family. As to quaternary structure, monomer.

The protein resides in the cytoplasm. It carries out the reaction AMP + ATP = 2 ADP. The protein operates within purine metabolism; AMP biosynthesis via salvage pathway; AMP from ADP: step 1/1. In terms of biological role, catalyzes the reversible transfer of the terminal phosphate group between ATP and AMP. Plays an important role in cellular energy homeostasis and in adenine nucleotide metabolism. The sequence is that of Adenylate kinase from Lactobacillus gasseri (strain ATCC 33323 / DSM 20243 / BCRC 14619 / CIP 102991 / JCM 1131 / KCTC 3163 / NCIMB 11718 / NCTC 13722 / AM63).